The chain runs to 397 residues: 1-deoxy-D-xylulose 5-phosphate reductoisomerase (397 aa).

Positions 17, 18, 19, 20, 47, and 130 each coordinate NADPH. 1-deoxy-D-xylulose 5-phosphate is bound at residue Lys-131. NADPH is bound at residue Glu-132. A Mn(2+)-binding site is contributed by Asp-156. Residues Ser-157, Glu-158, Ser-182, and His-205 each coordinate 1-deoxy-D-xylulose 5-phosphate. Glu-158 contributes to the Mn(2+) binding site. Position 211 (Gly-211) interacts with NADPH. 1-deoxy-D-xylulose 5-phosphate is bound by residues Ser-218, Asn-223, Lys-224, and Glu-227. A Mn(2+)-binding site is contributed by Glu-227.

Belongs to the DXR family. Requires Mg(2+) as cofactor. Mn(2+) is required as a cofactor.

The catalysed reaction is 2-C-methyl-D-erythritol 4-phosphate + NADP(+) = 1-deoxy-D-xylulose 5-phosphate + NADPH + H(+). The protein operates within isoprenoid biosynthesis; isopentenyl diphosphate biosynthesis via DXP pathway; isopentenyl diphosphate from 1-deoxy-D-xylulose 5-phosphate: step 1/6. In terms of biological role, catalyzes the NADPH-dependent rearrangement and reduction of 1-deoxy-D-xylulose-5-phosphate (DXP) to 2-C-methyl-D-erythritol 4-phosphate (MEP). This chain is 1-deoxy-D-xylulose 5-phosphate reductoisomerase, found in Rhizobium rhizogenes (strain K84 / ATCC BAA-868) (Agrobacterium radiobacter).